A 455-amino-acid chain; its full sequence is Bifunctional protein GlmU (455 aa).

The segment at 1-232 is pyrophosphorylase; the sequence is MASTTGALIL…DPNLLGVNNP (232 aa). UDP-N-acetyl-alpha-D-glucosamine-binding positions include 10–13, Lys24, Gln75, and 80–81; these read LAAG and GT. Position 106 (Asp106) interacts with Mg(2+). The UDP-N-acetyl-alpha-D-glucosamine site is built by Gly141, Glu155, Asn172, and Asn230. Asn230 contributes to the Mg(2+) binding site. Residues 233–253 are linker; that stretch reads AELIRSEALLRTRLVIGHIEG. Residues 254 to 455 are N-acetyltransferase; it reads GVLIHAPETV…QTNLPRKPKA (202 aa). Positions 336 and 354 each coordinate UDP-N-acetyl-alpha-D-glucosamine. His366 acts as the Proton acceptor in catalysis. UDP-N-acetyl-alpha-D-glucosamine-binding residues include Tyr369 and Asn380. Acetyl-CoA-binding positions include Ala383, 389–390, Ser408, Ala426, and Arg443; that span reads NY.

This sequence in the N-terminal section; belongs to the N-acetylglucosamine-1-phosphate uridyltransferase family. The protein in the C-terminal section; belongs to the transferase hexapeptide repeat family. Homotrimer. Requires Mg(2+) as cofactor.

It localises to the cytoplasm. The enzyme catalyses alpha-D-glucosamine 1-phosphate + acetyl-CoA = N-acetyl-alpha-D-glucosamine 1-phosphate + CoA + H(+). The catalysed reaction is N-acetyl-alpha-D-glucosamine 1-phosphate + UTP + H(+) = UDP-N-acetyl-alpha-D-glucosamine + diphosphate. Its pathway is nucleotide-sugar biosynthesis; UDP-N-acetyl-alpha-D-glucosamine biosynthesis; N-acetyl-alpha-D-glucosamine 1-phosphate from alpha-D-glucosamine 6-phosphate (route II): step 2/2. It functions in the pathway nucleotide-sugar biosynthesis; UDP-N-acetyl-alpha-D-glucosamine biosynthesis; UDP-N-acetyl-alpha-D-glucosamine from N-acetyl-alpha-D-glucosamine 1-phosphate: step 1/1. The protein operates within bacterial outer membrane biogenesis; LPS lipid A biosynthesis. Catalyzes the last two sequential reactions in the de novo biosynthetic pathway for UDP-N-acetylglucosamine (UDP-GlcNAc). The C-terminal domain catalyzes the transfer of acetyl group from acetyl coenzyme A to glucosamine-1-phosphate (GlcN-1-P) to produce N-acetylglucosamine-1-phosphate (GlcNAc-1-P), which is converted into UDP-GlcNAc by the transfer of uridine 5-monophosphate (from uridine 5-triphosphate), a reaction catalyzed by the N-terminal domain. This is Bifunctional protein GlmU from Nitratidesulfovibrio vulgaris (strain ATCC 29579 / DSM 644 / CCUG 34227 / NCIMB 8303 / VKM B-1760 / Hildenborough) (Desulfovibrio vulgaris).